We begin with the raw amino-acid sequence, 340 residues long: tRNA N6-adenosine threonylcarbamoyltransferase (340 aa).

Residues H114 and H118 each coordinate Fe cation. Substrate is bound by residues 140-144 (TISGG), D173, G186, D190, and N281. Position 309 (D309) interacts with Fe cation.

The protein belongs to the KAE1 / TsaD family. It depends on Fe(2+) as a cofactor.

The protein resides in the cytoplasm. The enzyme catalyses L-threonylcarbamoyladenylate + adenosine(37) in tRNA = N(6)-L-threonylcarbamoyladenosine(37) in tRNA + AMP + H(+). Functionally, required for the formation of a threonylcarbamoyl group on adenosine at position 37 (t(6)A37) in tRNAs that read codons beginning with adenine. Is involved in the transfer of the threonylcarbamoyl moiety of threonylcarbamoyl-AMP (TC-AMP) to the N6 group of A37, together with TsaE and TsaB. TsaD likely plays a direct catalytic role in this reaction. This chain is tRNA N6-adenosine threonylcarbamoyltransferase, found in Christiangramia forsetii (strain DSM 17595 / CGMCC 1.15422 / KT0803) (Gramella forsetii).